The chain runs to 109 residues: ATP synthase subunit c (109 aa).

2 helical membrane passes run 42–62 (YIGTGITMLAAGAVGLMQGFS) and 88–108 (LALAEAVAIYALIVSILIIFV).

The protein belongs to the ATPase C chain family. In terms of assembly, F-type ATPases have 2 components, F(1) - the catalytic core - and F(0) - the membrane proton channel. F(1) has five subunits: alpha(3), beta(3), gamma(1), delta(1), epsilon(1). F(0) has three main subunits: a(1), b(2) and c(10-14). The alpha and beta chains form an alternating ring which encloses part of the gamma chain. F(1) is attached to F(0) by a central stalk formed by the gamma and epsilon chains, while a peripheral stalk is formed by the delta and b chains.

Its subcellular location is the cell membrane. Its function is as follows. F(1)F(0) ATP synthase produces ATP from ADP in the presence of a proton or sodium gradient. F-type ATPases consist of two structural domains, F(1) containing the extramembraneous catalytic core and F(0) containing the membrane proton channel, linked together by a central stalk and a peripheral stalk. During catalysis, ATP synthesis in the catalytic domain of F(1) is coupled via a rotary mechanism of the central stalk subunits to proton translocation. Functionally, key component of the F(0) channel; it plays a direct role in translocation across the membrane. A homomeric c-ring of between 10-14 subunits forms the central stalk rotor element with the F(1) delta and epsilon subunits. This Ureaplasma urealyticum serovar 10 (strain ATCC 33699 / Western) protein is ATP synthase subunit c.